The chain runs to 725 residues: RNA-directed RNA polymerase (725 aa).

A RdRp catalytic domain is found at P424–V544.

This sequence belongs to the tombusviridae RNA polymerase family.

It carries out the reaction RNA(n) + a ribonucleoside 5'-triphosphate = RNA(n+1) + diphosphate. In terms of biological role, RNA-dependent RNA polymerase that plays an essential role in the virus replication. This is RNA-directed RNA polymerase from Chenopodium amaranticolor (Quinoa).